The following is a 218-amino-acid chain: Ribose-5-phosphate isomerase A (218 aa).

Substrate is bound by residues 28–31, 81–84, and 94–97; these read TGST, DGAD, and KGGG. The active-site Proton acceptor is the glutamate 103. Substrate is bound at residue lysine 121.

This sequence belongs to the ribose 5-phosphate isomerase family. In terms of assembly, homodimer.

It catalyses the reaction aldehydo-D-ribose 5-phosphate = D-ribulose 5-phosphate. The protein operates within carbohydrate degradation; pentose phosphate pathway; D-ribose 5-phosphate from D-ribulose 5-phosphate (non-oxidative stage): step 1/1. In terms of biological role, catalyzes the reversible conversion of ribose-5-phosphate to ribulose 5-phosphate. The sequence is that of Ribose-5-phosphate isomerase A from Aliivibrio fischeri (strain ATCC 700601 / ES114) (Vibrio fischeri).